The chain runs to 367 residues: Alanine racemase (367 aa).

The active-site Proton acceptor; specific for D-alanine is the Lys40. Lys40 is modified (N6-(pyridoxal phosphate)lysine). Arg136 contributes to the substrate binding site. Tyr263 acts as the Proton acceptor; specific for L-alanine in catalysis. Met310 contacts substrate.

It belongs to the alanine racemase family. Pyridoxal 5'-phosphate is required as a cofactor.

It catalyses the reaction L-alanine = D-alanine. The protein operates within amino-acid biosynthesis; D-alanine biosynthesis; D-alanine from L-alanine: step 1/1. Functionally, catalyzes the interconversion of L-alanine and D-alanine. May also act on other amino acids. The protein is Alanine racemase (alr) of Streptococcus pneumoniae (strain Hungary19A-6).